The following is a 79-amino-acid chain: Mipartoxin-3 (79 aa).

The N-terminal stretch at 1-21 is a signal peptide; the sequence is MKTLLLTLVVVTIVCLDLGNS. Intrachain disulfides connect Cys-24/Cys-41, Cys-34/Cys-59, Cys-63/Cys-71, and Cys-72/Cys-77.

This sequence belongs to the three-finger toxin family. Short-chain subfamily. Expressed by the venom gland.

It localises to the secreted. Its function is as follows. Snake venom neurotoxin that blocks neuromuscular transmission, presenting a postsynaptic action through the nicotinic acetylcholine receptor (nAChR). Has no cytotoxic activity. The protein is Mipartoxin-3 of Micrurus mipartitus (Red-tailed coral snake).